The following is a 270-amino-acid chain: Purine nucleoside phosphorylase BT_4389 (270 aa).

3 residues coordinate Zn(2+): His79, Cys124, and His141.

It belongs to the purine nucleoside phosphorylase YfiH/LACC1 family. Homodimer. It depends on Cu(2+) as a cofactor. Requires Zn(2+) as cofactor.

The enzyme catalyses adenosine + phosphate = alpha-D-ribose 1-phosphate + adenine. It catalyses the reaction S-methyl-5'-thioadenosine + phosphate = 5-(methylsulfanyl)-alpha-D-ribose 1-phosphate + adenine. It carries out the reaction inosine + phosphate = alpha-D-ribose 1-phosphate + hypoxanthine. The catalysed reaction is adenosine + H2O + H(+) = inosine + NH4(+). In terms of biological role, purine nucleoside enzyme that catalyzes the phosphorolysis of adenosine and inosine nucleosides, yielding D-ribose 1-phosphate and the respective free bases, adenine and hypoxanthine. Also catalyzes the phosphorolysis of S-methyl-5'-thioadenosine into adenine and S-methyl-5-thio-alpha-D-ribose 1-phosphate. Also has adenosine deaminase activity. The protein is Purine nucleoside phosphorylase BT_4389 of Bacteroides thetaiotaomicron (strain ATCC 29148 / DSM 2079 / JCM 5827 / CCUG 10774 / NCTC 10582 / VPI-5482 / E50).